The primary structure comprises 245 residues: UPF0246 protein CE1889 (245 aa).

Residues 1–20 (MLILLPPSETKTPGGAGAPL) form a disordered region.

It belongs to the UPF0246 family.

The polypeptide is UPF0246 protein CE1889 (Corynebacterium efficiens (strain DSM 44549 / YS-314 / AJ 12310 / JCM 11189 / NBRC 100395)).